Consider the following 393-residue polypeptide: Bifunctional chrysanthemol synthase, chloroplastic (393 aa).

A compositionally biased stretch (low complexity) spans Met1 to Ser18. Residues Met1–Pro22 form a disordered region. Residues Met1 to Ser53 constitute a chloroplast transit peptide. Positions 99, 102, and 137 each coordinate dimethylallyl diphosphate. Mg(2+) contacts are provided by Asp144 and Asp148. Dimethylallyl diphosphate-binding residues include Arg153, Arg154, Lys241, Gln280, Asp287, Lys297, and Lys306.

It belongs to the FPP/GGPP synthase family. It depends on Mg(2+) as a cofactor. As to expression, restricted to glandular trichomes during achene maturation. Expressed in flowers and in both ray and disk florets.

It is found in the plastid. The protein resides in the chloroplast. It catalyses the reaction 2 dimethylallyl diphosphate = (R,R)-chrysanthemyl diphosphate + diphosphate. The catalysed reaction is (R,R)-chrysanthemyl diphosphate + H2O = (R,R)-chrysanthemol + diphosphate. It carries out the reaction (R)-lavandulyl diphosphate + H2O = (R)-lavandulol + diphosphate. The protein operates within isoprenoid biosynthesis. Functionally, component of the monoterpenoid pyrethrins biosynthesis; pyrethrins are widely used plant-derived pesticide. Catalyzes the condensation of two molecules of dimethylallyl diphosphate to produce chrysanthemyl diphosphate (CPP), a monoterpene with a non-head-to-tail or irregular c1'-2-3 linkage between isoprenoid units. In a second step, hydrolyzes the diphosphate moiety of CPP to form chrysanthemol. With a lower efficiency, can also converts dimethylallyl diphosphate into lavandulyl diphosphate (LPP), and subsequently LPP into lavandulol. The chain is Bifunctional chrysanthemol synthase, chloroplastic from Tanacetum cinerariifolium (Dalmatian daisy).